A 257-amino-acid chain; its full sequence is Ribonuclease PH (257 aa).

Phosphate contacts are provided by residues Arg-87 and 125–127 (GTR).

The protein belongs to the RNase PH family. Homohexameric ring arranged as a trimer of dimers.

The enzyme catalyses tRNA(n+1) + phosphate = tRNA(n) + a ribonucleoside 5'-diphosphate. Phosphorolytic 3'-5' exoribonuclease that plays an important role in tRNA 3'-end maturation. Removes nucleotide residues following the 3'-CCA terminus of tRNAs; can also add nucleotides to the ends of RNA molecules by using nucleoside diphosphates as substrates, but this may not be physiologically important. Probably plays a role in initiation of 16S rRNA degradation (leading to ribosome degradation) during starvation. The protein is Ribonuclease PH of Geobacillus kaustophilus (strain HTA426).